The primary structure comprises 31 residues: Cyclotide vpub-B (31 aa).

The segment at residues 1-31 is a cross-link (cyclopeptide (Gly-Asn)); it reads GIIPCGESCVFIPCITSVVGCSCKSKVCYKN. Cystine bridges form between Cys5–Cys21, Cys9–Cys23, and Cys14–Cys28.

Belongs to the cyclotide family. Bracelet subfamily. This is a cyclic peptide.

Functionally, probably participates in a plant defense mechanism. This chain is Cyclotide vpub-B, found in Viola pubescens (Downy yellow violet).